Here is a 678-residue protein sequence, read N- to C-terminus: MAPSLSPGPAALRRAPQLLLLLLAAECALAALLPAREATQFLRPRQRRAFQVFEEAKQGHLERECVEELCSREEAREVFENDPETDYFYPRYLDCINKYGSPYTKNSGFATCVQNLPDQCTPNPCDRKGTQACQDLMGNFFCLCKAGWGGRLCDKDVNECSQENGGCLQICHNKPGSFHCSCHSGFELSSDGRTCQDIDECADSEACGEARCKNLPGSYSCLCDEGFAYSSQEKACRDVDECLQGRCEQVCVNSPGSYTCHCDGRGGLKLSQDMDTCEDILPCVPFSVAKSVKSLYLGRMFSGTPVIRLRFKRLQPTRLVAEFDFRTFDPEGILLFAGGHQDSTWIVLALRAGRLELQLRYNGVGRVTSSGPVINHGMWQTISVEELARNLVIKVNRDAVMKIAVAGDLFQPERGLYHLNLTVGGIPFHEKDLVQPINPRLDGCMRSWNWLNGEDTTIQETVKVNTRMQCFSVTERGSFYPGSGFAFYSLDYMRTPLDVGTESTWEVEVVAHIRPAADTGVLFALWAPDLRAVPLSVALVDYHSTKKLKKQLVVLAVEHTALALMEIKVCDGQEHVVTVSLRDGEATLEVDGTRGQSEVSAAQLQERLAVLERHLRSPVLTFAGGLPDVPVTSAPVTAFYRGCMTLEVNRRLLDLDEAAYKHSDITAHSCPPVEPAAA.

Residues 1–30 (MAPSLSPGPAALRRAPQLLLLLLAAECALA) form the signal peptide. In terms of domain architecture, Gla spans 53–94 (FEEAKQGHLERECVEELCSREEAREVFENDPETDYFYPRYLD). A disulfide bond links C65 and C70. S71 is modified (phosphoserine; by FAM20C). The 39-residue stretch at 116-154 (LPDQCTPNPCDRKGTQACQDLMGNFFCLCKAGWGGRLCD) folds into the EGF-like 1; calcium-binding domain. Disulfide bonds link C120-C133, C125-C142, C144-C153, C160-C171, C167-C180, C182-C195, C201-C212, C207-C221, C223-C236, C242-C251, C247-C260, C262-C277, C283-C570, and C444-C470. Residues 156 to 196 (DVNECSQENGGCLQICHNKPGSFHCSCHSGFELSSDGRTCQ) form the EGF-like 2; calcium-binding domain. Residues 197 to 237 (DIDECADSEACGEARCKNLPGSYSCLCDEGFAYSSQEKACR) enclose the EGF-like 3; calcium-binding domain. In terms of domain architecture, EGF-like 4; calcium-binding spans 238 to 278 (DVDECLQGRCEQVCVNSPGSYTCHCDGRGGLKLSQDMDTCE). Laminin G-like domains lie at 298-470 (GRMF…RMQC) and 477-670 (GSFY…AHSC). The Ca(2+) site is built by D329 and E331. N420 carries an N-linked (GlcNAc...) asparagine glycan. R440 is a binding site for Ca(2+). Phosphothreonine occurs at positions 621 and 637. Y640 is modified (phosphotyrosine). C643 and C670 form a disulfide bridge. D656 contributes to the Ca(2+) binding site.

Heterodimer and heterotetramer with AXL. Post-translationally, proteolytically processed after secretion to yield a N-terminal 36 kDa protein and a C-terminal 50 kDa protein including the laminin G-like domains which activates AXL. Gamma-carboxyglutamate residues are formed by vitamin K dependent carboxylation. These residues are essential for the binding of calcium. As to expression, plasma. Isoform 1 and isoform 2 are widely expressed, isoform 1 being expressed at higher levels than isoform 2 in most tissues. Isoform 2 is the predominant form in spleen.

It localises to the secreted. Ligand for tyrosine-protein kinase receptors AXL, TYRO3 and MER whose signaling is implicated in cell growth and survival, cell adhesion and cell migration. GAS6/AXL signaling plays a role in various processes such as endothelial cell survival during acidification by preventing apoptosis, optimal cytokine signaling during human natural killer cell development, hepatic regeneration, gonadotropin-releasing hormone neuron survival and migration, platelet activation, or regulation of thrombotic responses. Functionally, (Microbial infection) Can bridge virus envelope phosphatidylserine to the TAM receptor tyrosine kinase Axl to mediate viral entry by apoptotic mimicry. Plays a role in Dengue cell entry by apoptotic mimicry. Plays a role in Vaccinia virus cell entry by apoptotic mimicry. Plays a role in ebolavirus and marburgvirus cell entry by apoptotic mimicry. In Homo sapiens (Human), this protein is Growth arrest-specific protein 6.